Here is a 248-residue protein sequence, read N- to C-terminus: MRKPIIAGNWKMNKTVAETLQFINEIRDQAETTDVEVVLCCPFTALSEAKKALGASKIKLGAQNMHWEDNGAFTGEISAEMLKELGVDYILIGHSERRQYFNETDETVNKKIKKALEQKLMPILCVGETLQEREAAQTFDVIKNQITIDLEGILPDSMKDIVIAYEPIWAIGTGKTASSQDANHVIAYIRQLIQEKYDDGISETVRIQYGGSVKPENATEIMNEEDIDGALVGGASLKADAFLGIVNF.

Position 9 to 11 (9 to 11 (NWK)) interacts with substrate. Histidine 94 serves as the catalytic Electrophile. Residue glutamate 166 is the Proton acceptor of the active site. Residues glycine 172, serine 212, and 233–234 (GG) contribute to the substrate site.

It belongs to the triosephosphate isomerase family. In terms of assembly, homodimer.

It is found in the cytoplasm. The enzyme catalyses D-glyceraldehyde 3-phosphate = dihydroxyacetone phosphate. It participates in carbohydrate biosynthesis; gluconeogenesis. Its pathway is carbohydrate degradation; glycolysis; D-glyceraldehyde 3-phosphate from glycerone phosphate: step 1/1. In terms of biological role, involved in the gluconeogenesis. Catalyzes stereospecifically the conversion of dihydroxyacetone phosphate (DHAP) to D-glyceraldehyde-3-phosphate (G3P). This chain is Triosephosphate isomerase, found in Alkaliphilus metalliredigens (strain QYMF).